The sequence spans 195 residues: MAAAAAVRAGVNFTQRLNRISPVCRVCPLLRLNRCTGAAVRRAVDGFSAPSRRLRTSIGVCQSEDSSAPEEDAHAQEHIVNVVYIDRSGRRIPVQARVGDNVLYLAHKHGIDLEGACEASLACSTCHVYVSSGHYDRLPEPEEREDDMLDMAPLLQENSRLGCQIILTPELDGMELTLPKVTRNFYVDGHVPKPH.

The N-terminal 61 residues, 1 to 61 (MAAAAAVRAG…RRLRTSIGVC (61 aa)), are a transit peptide targeting the mitochondrion. A 2Fe-2S ferredoxin-type domain is found at 81–182 (NVVYIDRSGR…GMELTLPKVT (102 aa)). Cys-117, Cys-123, Cys-126, and Cys-163 together coordinate [2Fe-2S] cluster.

The protein belongs to the adrenodoxin/putidaredoxin family. In terms of assembly, component of the mitochondrial core iron-sulfur cluster (ISC) complex composed of NFS1, LYRM4, NDUFAB1, ISCU, FXN, and FDX2; this complex is a heterohexamer containing two copies of each monomer. Form a heterodimer complex with NFS1. The cofactor is [2Fe-2S] cluster.

The protein localises to the mitochondrion. It is found in the mitochondrion matrix. Functionally, electron donor, of the core iron-sulfur cluster (ISC) assembly complex, that acts to reduce the persulfide into sulfide during [2Fe-2S] clusters assembly on the scaffolding protein ISCU. The core iron-sulfur cluster (ISC) assembly complex is involved in the de novo synthesis of a [2Fe-2S] cluster, the first step of the mitochondrial iron-sulfur protein biogenesis. This process is initiated by the cysteine desulfurase complex (NFS1:LYRM4:NDUFAB1) that produces persulfide which is delivered on the scaffold protein ISCU in a FXN-dependent manner. Then this complex is stabilized by FDX2 which provides reducing equivalents to accomplish the [2Fe-2S] cluster assembly. Finally, the [2Fe-2S] cluster is transferred from ISCU to chaperone proteins, including HSCB, HSPA9 and GLRX5. Essential for coenzyme Q biosynthesis: together with FDXR, transfers the electrons required for the hydroxylation reaction performed by COQ6. The chain is Ferredoxin-2, mitochondrial from Danio rerio (Zebrafish).